Here is a 361-residue protein sequence, read N- to C-terminus: Glutamine synthetase (361 aa).

Positions 23–103 constitute a GS beta-grasp domain; sequence CQAMYIWVDG…VLCETYKYNK (81 aa). In terms of domain architecture, GS catalytic spans 110 to 361; it reads QRWKCMEVMT…LVRTICLNEQ (252 aa). Glu-131 is a binding site for ATP. Glu-131, Glu-133, and Glu-200 together coordinate Mn(2+). Residue 200–205 coordinates ATP; sequence EFQVGP. 243-244 is an L-glutamate binding site; that stretch reads DW. A Mn(2+)-binding site is contributed by His-250. ATP-binding positions include 252-254, Arg-316, and Arg-321; that span reads NFS. Arg-316 is a binding site for L-glutamate. 333–335 is an ADP binding site; it reads YLE. Position 335 (Glu-335) interacts with Mn(2+). Arg-337 is an L-glutamate binding site.

The protein belongs to the glutamine synthetase family. Mg(2+) serves as cofactor. Requires Mn(2+) as cofactor.

It is found in the cytoplasm. The protein localises to the cytosol. It localises to the microsome. Its subcellular location is the mitochondrion. It catalyses the reaction L-glutamate + NH4(+) + ATP = L-glutamine + ADP + phosphate + H(+). In terms of biological role, glutamine synthetase that catalyzes the ATP-dependent conversion of glutamate and ammonia to glutamine. In Panulirus argus (Caribbean spiny lobster), this protein is Glutamine synthetase.